Consider the following 284-residue polypeptide: MTRNPVVAGMFYPAEYHELLEMIEYCYLNPRGPRELPSKRGKYTKPLGIVSPHAGYIYSGPVAAHGYKKISENISGEITAIILGPNHTGLGSGIATMKGTWKTPFGDMEIDNEFADRLWKECDILDMDENSHLREHSIEVQLPFLKHLEDLNIAKFKFVPISMMMQDYESCIDVGYVIAKVARELNRKIVIIASTDFSHYEPQEQASKKDAVVIKDILELNDEEIFTDVVTHTISMCGYGPVIAMVKAMKDLGARTSYLLYYSTSGDVTKDYSEVVGYASLLIK.

This sequence belongs to the MEMO1 family.

The polypeptide is MEMO1 family protein MMP1387 (Methanococcus maripaludis (strain DSM 14266 / JCM 13030 / NBRC 101832 / S2 / LL)).